A 563-amino-acid chain; its full sequence is BOS complex subunit NCLN (563 aa).

A signal peptide spans 1–42 (MLEEAGEVLENMLKASCLPLGFIVFLPAVLLLVAPPLPAADA). At 43 to 522 (AHEFTVYRMQ…VMNAYRVKPA (480 aa)) the chain is on the lumenal side. N-linked (GlcNAc...) asparagine glycosylation is found at Asn241 and Asn428. Residues 523–543 (VFDLLLAVGIAAYLGMAYVAV) traverse the membrane as a helical segment. The Cytoplasmic segment spans residues 544-563 (QHFSLLYKTVQRLLVKAKTQ).

It belongs to the nicastrin family. Component of the back of Sec61 (BOS) complex, composed of NCLN/Nicalin, NOMO (NOMO1, NOMO2 or NOMO3) and TMEM147. The BOS complex is part of the multi-pass translocon (MPT) complex, composed of three subcomplexes, the GEL complex (composed of RAB5IF/OPTI and TMCO1), the BOS complex (composed of NCLN/Nicalin, NOMO and TMEM147) and the PAT complex (composed of WDR83OS/Asterix and CCDC47). The MPT complex associates with the SEC61 complex. As to expression, highly expressed in pancreas and skeletal muscle and, at lower levels, in heart.

The protein resides in the endoplasmic reticulum membrane. Functionally, component of the multi-pass translocon (MPT) complex that mediates insertion of multi-pass membrane proteins into the lipid bilayer of membranes. The MPT complex takes over after the SEC61 complex: following membrane insertion of the first few transmembrane segments of proteins by the SEC61 complex, the MPT complex occludes the lateral gate of the SEC61 complex to promote insertion of subsequent transmembrane regions. May antagonize Nodal signaling and subsequent organization of axial structures during mesodermal patterning, via its interaction with NOMO. This chain is BOS complex subunit NCLN, found in Homo sapiens (Human).